A 293-amino-acid polypeptide reads, in one-letter code: Glutamyl-Q tRNA(Asp) synthetase (293 aa).

L-glutamate is bound by residues 8–12 and E44; that span reads RFAPT. The 'HIGH' region signature appears at 11 to 21; it reads PTPSGYLHFGS. The Zn(2+) site is built by C100, C102, Y114, and C118. Y171 and R189 together coordinate L-glutamate. Positions 227–231 match the 'KMSKS' region motif; the sequence is KLGKS. Residue K230 coordinates ATP.

This sequence belongs to the class-I aminoacyl-tRNA synthetase family. GluQ subfamily. Requires Zn(2+) as cofactor.

In terms of biological role, catalyzes the tRNA-independent activation of glutamate in presence of ATP and the subsequent transfer of glutamate onto a tRNA(Asp). Glutamate is transferred on the 2-amino-5-(4,5-dihydroxy-2-cyclopenten-1-yl) moiety of the queuosine in the wobble position of the QUC anticodon. This Pseudomonas aeruginosa (strain ATCC 15692 / DSM 22644 / CIP 104116 / JCM 14847 / LMG 12228 / 1C / PRS 101 / PAO1) protein is Glutamyl-Q tRNA(Asp) synthetase.